We begin with the raw amino-acid sequence, 318 residues long: Lipid A biosynthesis acyltransferase (318 aa).

The chain crosses the membrane as a helical span at residues 27-47 (PQYWGIWLGIFFLLLLAFVPF). The HXXXXD motif signature appears at 145 to 150 (HGWAID).

The protein belongs to the LpxL/LpxM/LpxP family. LpxM subfamily.

It is found in the cell inner membrane. It catalyses the reaction an alpha-Kdo-(2-&gt;4)-alpha-Kdo-(2-&gt;6)-(acyl)-lipid IVA + a fatty acyl-[ACP] = an alpha-Kdo-(2-&gt;4)-alpha-Kdo-(2-&gt;6)-lipid A + holo-[ACP]. The protein operates within glycolipid biosynthesis; KDO(2)-lipid A biosynthesis; KDO(2)-lipid A from CMP-3-deoxy-D-manno-octulosonate and lipid IV(A): step 4/4. It functions in the pathway bacterial outer membrane biogenesis; lipopolysaccharide biosynthesis. Its function is as follows. Catalyzes the transfer of an acyl chain from an acyl-[acyl-carrier-protein] (ACP) to a Kdo(2)-(acyl)-lipid IV(A) to form a Kdo(2)-lipid A. The chain is Lipid A biosynthesis acyltransferase from Haemophilus influenzae (strain ATCC 51907 / DSM 11121 / KW20 / Rd).